A 1488-amino-acid polypeptide reads, in one-letter code: Phenolphthiocerol/phthiocerol polyketide synthase subunit E (1488 aa).

The Ketosynthase family 3 (KS3) domain maps to 5-438 (ENAIAVVGMA…GTNAHVVLEE (434 aa)). Residues cysteine 184, histidine 320, and histidine 361 each act as for beta-ketoacyl synthase activity in the active site. The interval 551–868 (VFLFPGQGAQ…GELWSAGVEV (318 aa)) is acyltransferase. Catalysis depends on serine 641, which acts as the For malonyltransferase activity. Residues 930–1004 (NGESQTEVTL…SLTAAVDASF (75 aa)) enclose the Carrier domain. Serine 965 is modified (O-(pantetheine 4'-phosphoryl)serine). An NADP(+)-binding site is contributed by 1286 to 1331 (EGVVAVELEGEGRSVLRPDVDLRRTVGWFTTYYPVPLACATGLGAL).

NADP(+) is required as a cofactor. It depends on pantetheine 4'-phosphate as a cofactor.

It catalyses the reaction icosanoyl-[(phenol)carboxyphthiodiolenone synthase] + 2 (S)-methylmalonyl-CoA + 3 malonyl-CoA + 5 NADPH + 10 H(+) = C32-carboxyphthiodiolenone-[(phenol)carboxyphthiodiolenone synthase] + 5 CO2 + 5 NADP(+) + 5 CoA + 2 H2O. The enzyme catalyses docosanoyl-[(phenol)carboxyphthiodiolenone synthase] + 2 (S)-methylmalonyl-CoA + 3 malonyl-CoA + 5 NADPH + 10 H(+) = C34-carboxyphthiodiolenone-[(phenol)carboxyphthiodiolenone synthase] + 5 CO2 + 5 NADP(+) + 5 CoA + 2 H2O. The catalysed reaction is 17-(4-hydroxyphenyl)heptadecanoyl-[(phenol)carboxyphthiodiolenone synthase] + 2 (S)-methylmalonyl-CoA + 3 malonyl-CoA + 5 NADPH + 10 H(+) = C35-(phenol)carboxyphthiodiolenone-[(phenol)carboxyphthiodiolenone synthase] + 5 CO2 + 5 NADP(+) + 5 CoA + 2 H2O. It carries out the reaction 19-(4-hydroxyphenyl)nonadecanoyl-[(phenol)carboxyphthiodiolenone synthase] + 2 (S)-methylmalonyl-CoA + 3 malonyl-CoA + 5 NADPH + 10 H(+) = C37-(phenol)carboxyphthiodiolenone-[(phenol)carboxyphthiodiolenone synthase] + 5 CO2 + 5 NADP(+) + 5 CoA + 2 H2O. Its pathway is lipid metabolism; fatty acid biosynthesis. In terms of biological role, part of the PpsABCDE complex involved in the biosynthesis of the lipid core common to phthiocerols and phenolphthiocerols by successive additions of malonyl-CoA or methylmalonyl-CoA extender units. PpsA can accept as substrate the activated forms of either icosanoyl (C20), docosanoyl (C22) or lignoceroyl (C24) groups from FadD26, or a (4-hydroxyphenyl)-C17 or (4-hydroxyphenyl)-C19 fatty acyl from FadD29. PpsA initiates the biosynthesis and extends its substrate using a malonyl-CoA extender unit. The PpsB and PpsC proteins add the second and third malonyl-CoA extender units. PpsD adds an (R)-methylmalonyl unit and PpsE adds a second (R)-methylmalonyl unit. The incorporation of the methylmalonyl units results in formation of two branched methyl groups in the elongated product. In Mycobacterium tuberculosis (strain CDC 1551 / Oshkosh), this protein is Phenolphthiocerol/phthiocerol polyketide synthase subunit E (ppsE).